A 101-amino-acid chain; its full sequence is Small ribosomal subunit protein uS14 (101 aa).

Over residues 1-10 the composition is skewed to basic and acidic residues; the sequence is MAKKSSIEKN. Positions 1-23 are disordered; it reads MAKKSSIEKNNRRKKMTKNAAPK. Basic residues predominate over residues 11–23; the sequence is NRRKKMTKNAAPK.

This sequence belongs to the universal ribosomal protein uS14 family. As to quaternary structure, part of the 30S ribosomal subunit. Contacts proteins S3 and S10.

Functionally, binds 16S rRNA, required for the assembly of 30S particles and may also be responsible for determining the conformation of the 16S rRNA at the A site. The protein is Small ribosomal subunit protein uS14 of Rhodopseudomonas palustris (strain HaA2).